Consider the following 276-residue polypeptide: Sulfur carrier protein FdhD (276 aa).

The active-site Cysteine persulfide intermediate is Cys122. Phe259–Lys264 is a binding site for Mo-bis(molybdopterin guanine dinucleotide).

This sequence belongs to the FdhD family.

It localises to the cytoplasm. Its function is as follows. Required for formate dehydrogenase (FDH) activity. Acts as a sulfur carrier protein that transfers sulfur from IscS to the molybdenum cofactor prior to its insertion into FDH. The polypeptide is Sulfur carrier protein FdhD (Photorhabdus laumondii subsp. laumondii (strain DSM 15139 / CIP 105565 / TT01) (Photorhabdus luminescens subsp. laumondii)).